We begin with the raw amino-acid sequence, 143 residues long: Insulin-like growth factor 1 (143 aa).

Positions 1–32 are cleaved as a signal peptide; it reads MITPTVKMRILSSSHLFYLALCLLTFTSSATA. Residues 33-61 form a b region; that stretch reads GPETLCGAELVDALQFVCGDRGFYFNKPT. 3 disulfides stabilise this stretch: cysteine 38–cysteine 80, cysteine 50–cysteine 93, and cysteine 79–cysteine 84. Positions 62 to 73 are c; it reads GYGSSSRRAPQT. An a region spans residues 74 to 94; the sequence is GIVDECCFRSCDLRRLEMYCA. The segment at 95–102 is d; the sequence is PLKPAKAA. The segment at 99 to 143 is disordered; it reads AKAARSVRAQRHTDMPKTQKYQPPSTNKKMKSQRRRKGSTFEEHK. Positions 103-143 are cleaved as a propeptide — e peptide; the sequence is RSVRAQRHTDMPKTQKYQPPSTNKKMKSQRRRKGSTFEEHK. The span at 126–136 shows a compositional bias: basic residues; sequence KKMKSQRRRKG.

The protein belongs to the insulin family. Forms a ternary complex with IGFR1 and ITGAV:ITGB3. Forms a ternary complex with IGFR1 and ITGA6:ITGB4. Forms a ternary complex with IGFBP3 and ALS.

The protein resides in the secreted. In terms of biological role, the insulin-like growth factors, isolated from plasma, are structurally and functionally related to insulin but have a much higher growth-promoting activity. May be a physiological regulator of [1-14C]-2-deoxy-D-glucose (2DG) transport and glycogen synthesis in osteoblasts. Stimulates glucose transport in bone-derived osteoblastic (PyMS) cells and is effective at much lower concentrations than insulin, not only regarding glycogen and DNA synthesis but also with regard to enhancing glucose uptake. May play a role in synapse maturation. Ca(2+)-dependent exocytosis of IGF1 is required for sensory perception of smell in the olfactory bulb. Acts as a ligand for IGF1R. Binds to the alpha subunit of IGF1R, leading to the activation of the intrinsic tyrosine kinase activity which autophosphorylates tyrosine residues in the beta subunit thus initiating a cascade of down-stream signaling events leading to activation of the PI3K-AKT/PKB and the Ras-MAPK pathways. Binds to integrins ITGAV:ITGB3 and ITGA6:ITGB4. Its binding to integrins and subsequent ternary complex formation with integrins and IGFR1 are essential for IGF1 signaling. Induces the phosphorylation and activation of IGFR1, MAPK3/ERK1, MAPK1/ERK2 and AKT1. As part of the MAPK/ERK signaling pathway, acts as a negative regulator of apoptosis in cardiomyocytes via promotion of STUB1/CHIP-mediated ubiquitination and degradation of ICER-type isoforms of CREM. The protein is Insulin-like growth factor 1 of Oryctolagus cuniculus (Rabbit).